A 260-amino-acid chain; its full sequence is Indole-3-glycerol phosphate synthase (260 aa).

Belongs to the TrpC family.

The catalysed reaction is 1-(2-carboxyphenylamino)-1-deoxy-D-ribulose 5-phosphate + H(+) = (1S,2R)-1-C-(indol-3-yl)glycerol 3-phosphate + CO2 + H2O. The protein operates within amino-acid biosynthesis; L-tryptophan biosynthesis; L-tryptophan from chorismate: step 4/5. The sequence is that of Indole-3-glycerol phosphate synthase from Neisseria meningitidis serogroup C / serotype 2a (strain ATCC 700532 / DSM 15464 / FAM18).